The following is a 128-amino-acid chain: Nucleoside diphosphate kinase B (128 aa).

Residue M1 is modified to N-acetylmethionine. K9, F39, T70, R81, and N91 together coordinate ATP. H94 acts as the Pros-phosphohistidine intermediate in catalysis.

It belongs to the NDK family. Mg(2+) is required as a cofactor.

It is found in the cytoplasm. The protein resides in the nucleus. It localises to the cell projection. Its subcellular location is the lamellipodium. The protein localises to the ruffle. It carries out the reaction a 2'-deoxyribonucleoside 5'-diphosphate + ATP = a 2'-deoxyribonucleoside 5'-triphosphate + ADP. The catalysed reaction is a ribonucleoside 5'-diphosphate + ATP = a ribonucleoside 5'-triphosphate + ADP. Major role in the synthesis of nucleoside triphosphates other than ATP. This Merluccius bilinearis (Silver hake) protein is Nucleoside diphosphate kinase B (nme2).